Here is a 587-residue protein sequence, read N- to C-terminus: Kelch-like protein 3 (587 aa).

The disordered stretch occupies residues 1 to 22; sequence MDGESIKPSSQPLIQTGDDEKN. Phosphoserine is present on Ser10. Residues 50–117 enclose the BTB domain; that stretch reads CDVMIVAEDV…IYTAEIEVTE (68 aa). In terms of domain architecture, BACK spans 152-254; the sequence is CLGIRAFADV…PRDYLVQTVE (103 aa). Thr295 bears the Phosphothreonine mark. Kelch repeat units lie at residues 302-347, 348-394, 396-441, 442-490, 491-537, and 539-585; these read VMIV…FMAG, HVYA…VLND, LYAV…VVEG, KLYA…VLSG, QLYA…AVNG, and LYVV…VIHK. At Thr375 the chain carries Phosphothreonine. 2 positions are modified to phosphoserine: Ser376 and Ser433.

This sequence belongs to the KLHL3 family. Homodimer. Component of the BCR(KLHL3) E3 ubiquitin ligase complex, at least composed of CUL3 and KLHL3 and RBX1. Interacts with CLDN8. In terms of processing, phosphorylation at Ser-433 by PKA or PKC decreases the interaction with WNK1 and WNK4, leading to inhibit their degradation by the BCR(KLHL3) complex. Phosphorylated at Ser-433 by PKC in response to angiotensin II signaling, decreasing ability to promote degradation of WNK1 and WNK4, leading to activation of Na-Cl cotransporter SLC12A3/NCC. Phosphorylation at Ser-433 is increased by insulin. Dephosphorylated at Ser-433 by calcineurin PPP3CA, promoting degradation of WNK1 and WNK4.

The protein resides in the cytoplasm. It localises to the cytoskeleton. It is found in the cytosol. It functions in the pathway protein modification; protein ubiquitination. In terms of biological role, substrate-specific adapter of a BCR (BTB-CUL3-RBX1) E3 ubiquitin ligase complex that acts as a regulator of ion transport in the distal nephron. The BCR(KLHL3) complex acts by mediating ubiquitination and degradation of WNK1 and WNK4, two activators of Na-Cl cotransporter SLC12A3/NCC in distal convoluted tubule cells of kidney, thereby regulating NaCl reabsorption. The BCR(KLHL3) complex also mediates ubiquitination and degradation of WNK3. The BCR(KLHL3) complex also mediates ubiquitination of CLDN8, a tight-junction protein required for paracellular chloride transport in the kidney, leading to its degradation. This Bos taurus (Bovine) protein is Kelch-like protein 3 (KLHL3).